A 733-amino-acid polypeptide reads, in one-letter code: Protein psiM (733 aa).

Residues 1 to 26 (MKKINNNKIFVLFLTILLYLLNITTA) form the signal peptide. 3 N-linked (GlcNAc...) asparagine glycosylation sites follow: N22, N65, and N96. Over 27-672 (QKPVSINIKI…VCQKAALVST (646 aa)) the chain is Extracellular. The 147-residue stretch at 114-260 (NYDSDSGNYI…YDYCGVCNGD (147 aa)) folds into the PA14 domain. N-linked (GlcNAc...) asparagine glycans are attached at residues N277, N336, N379, N428, N471, N537, N573, and N641. A helical membrane pass occupies residues 673 to 693 (AVIASVVVVGAVVLGAAIFAG). At 694–733 (KKGYDAWKTSQGNVMAASQANPLYTQSSNGGENPLYNSPT) the chain is on the cytoplasmic side.

Belongs to the prespore-cell-inducing factor family.

The protein localises to the membrane. This is Protein psiM (psiM) from Dictyostelium discoideum (Social amoeba).